Consider the following 387-residue polypeptide: MTSSGFLRAHPGVVRRCGFTRGGGLKVGPCALTDPGLAWVHAYYTDEALNWLAGLDNPLWKSGADVMDLLPGDMYVSEHVFKKILSRVGPEFFDSFIPIREVEECILFGFSPLSSTGMAALKAIDLVYGGYAPAAPGIPMEVYAWEMAYKIGAAPRLLRWVLIEGEGIEQFATLAESGLRGSLRDYIGTHPSGCKTPMDLGLVVKNVHGLVAALGMLMDSNIYHGDLKIDNLTVTEPGGPYKLIDFEFAHPFEARMRPMIEARGPITWLMPGTPACNPPEHDEETPCRDRRMKELGVTWQLGLIMLETIVLDEALVRDENMEWKRPDFKRLVSAVMEENGSLAPHDPRLLEGYLDLIGECLKRDTAVRMDLVTLMTELSLLIEKFKL.

The region spanning 82–381 (KKILSRVGPE…VTLMTELSLL (300 aa)) is the Protein kinase domain. Lys-122 contacts ATP. Asp-226 functions as the Proton acceptor in the catalytic mechanism.

It belongs to the protein kinase superfamily. Ser/Thr protein kinase family.

It catalyses the reaction L-seryl-[protein] + ATP = O-phospho-L-seryl-[protein] + ADP + H(+). The catalysed reaction is L-threonyl-[protein] + ATP = O-phospho-L-threonyl-[protein] + ADP + H(+). The polypeptide is Protein kinase ORF16 (ORF16) (Ictalurid herpesvirus 1 (strain Auburn) (IcHV-1)).